The primary structure comprises 779 residues: Serine/threonine-protein kinase SIK1 (779 aa).

The Protein kinase domain maps to 27–278; it reads YDVERTLGKG…IAQIRQHRWM (252 aa). ATP contacts are provided by residues 33–41 and Lys56; that span reads LGKGNFAVV. The active-site Proton acceptor is Asp149. Thr182 carries the post-translational modification Phosphothreonine; by LKB1 and GSK3-beta. A Phosphoserine; by autocatalysis modification is found at Ser186. The region spanning 303 to 343 is the UBA domain; that stretch reads DYNEQVLGIMQALGIDRQRTIESLQNSSYNHFAAIYYLLLE. At Thr322 the chain carries Phosphothreonine; by CaMK1. Disordered regions lie at residues 350–375 and 449–472; these read SAQP…LSSL and EARQ…STGR. Over residues 363–373 the composition is skewed to polar residues; it reads RQPQLRSSDLS. At Ser577 the chain carries Phosphoserine; by PKA. The interval 586-612 is RK-rich region; sequence KAFRQQLRKNARTKGFLGLNKIKGLAR. The tract at residues 621 to 641 is disordered; sequence TPRGGMSTFHTPAPSSGLQGC. Polar residues predominate over residues 628–641; it reads TFHTPAPSSGLQGC.

Belongs to the protein kinase superfamily. CAMK Ser/Thr protein kinase family. AMPK subfamily. As to quaternary structure, interacts (when phosphorylated on Thr-182 and Ser-186) with YWHAZ. Interacts with ATP1A1. Requires Mg(2+) as cofactor. Phosphorylated at Thr-182 by STK11/LKB1 in complex with STE20-related adapter-alpha (STRADA) pseudo kinase and CAB39, leading to its activation. Phosphorylation at Thr-182 promotes autophosphorylation at Ser-186, which is required for sustained activity. Autophosphorylation at Ser-186 is maintained by sequential phosphorylation at Thr-182 by GSK3-beta. GSK3-beta cannot initiate phosphorylation at Thr-182, it can only maintain it. Phosphorylation at Ser-577 by PKA promotes translocation to the cytoplasm. Phosphorylation at Thr-322 by CaMK1 following intracellular sodium concentration leads to activation. Expressed in lung, skin, ovary, heart and stomach. No expression in brain, liver or adult skeletal muscle but is present in skeletal muscle progenitor cells of the somite beginning at 9.5 dpc. Present at 8.0 dpc in the monolayer of presumptive myocardial cells but rapidly down-regulated at 8.5 dpc upon primitive ventricle formation, although still present in myocardial cells that will populate the primitive atrium and bulbus cordis. At 9.5 dpc expression is down-regulated in the primitive atrium but observed in the sinus venosus and truncus arteriosus.

The protein resides in the cytoplasm. Its subcellular location is the nucleus. The enzyme catalyses L-seryl-[protein] + ATP = O-phospho-L-seryl-[protein] + ADP + H(+). The catalysed reaction is L-threonyl-[protein] + ATP = O-phospho-L-threonyl-[protein] + ADP + H(+). With respect to regulation, activated by phosphorylation on Thr-182. Also activated by phosphorylation on Thr-322 in response to increases in intracellular sodium in parallel with elevations in intracellular calcium through the reversible sodium/calcium exchanger. Serine/threonine-protein kinase involved in various processes such as cell cycle regulation, gluconeogenesis and lipogenesis regulation, muscle growth and differentiation and tumor suppression. Phosphorylates HDAC4, HDAC5, PPME1, SREBF1, CRTC1/TORC1 and CRTC2/TORC2. Acts as a tumor suppressor and plays a key role in p53/TP53-dependent anoikis, a type of apoptosis triggered by cell detachment: required for phosphorylation of p53/TP53 in response to loss of adhesion and is able to suppress metastasis. Part of a sodium-sensing signaling network, probably by mediating phosphorylation of PPME1: following increases in intracellular sodium, SIK1 is activated by CaMK1 and phosphorylates PPME1 subunit of protein phosphatase 2A (PP2A), leading to dephosphorylation of sodium/potassium-transporting ATPase ATP1A1 and subsequent increase activity of ATP1A1. Acts as a regulator of muscle cells by phosphorylating and inhibiting class II histone deacetylases HDAC4 and HDAC5, leading to promote expression of MEF2 target genes in myocytes. Also required during cardiomyogenesis by regulating the exit of cardiomyoblasts from the cell cycle via down-regulation of CDKN1C/p57Kip2. Acts as a regulator of hepatic gluconeogenesis by phosphorylating and repressing the CREB-specific coactivators CRTC1/TORC1 and CRTC2/TORC2, leading to inhibit CREB activity. Also regulates hepatic lipogenesis by phosphorylating and inhibiting SREBF1. In concert with CRTC1/TORC1, regulates the light-induced entrainment of the circadian clock by attenuating PER1 induction; represses CREB-mediated transcription of PER1 by phosphorylating and deactivating CRTC1/TORC1. This Mus musculus (Mouse) protein is Serine/threonine-protein kinase SIK1 (Sik1).